Consider the following 313-residue polypeptide: Protein phosphatase PTC7 homolog fig (313 aa).

Positions 47-307 (KEPLTDLQLR…DDITVILASL (261 aa)) constitute a PPM-type phosphatase domain. Mn(2+) contacts are provided by Asp-83, Gly-84, and Asp-229.

It belongs to the PP2C family. Mg(2+) is required as a cofactor. Mn(2+) serves as cofactor.

It catalyses the reaction O-phospho-L-seryl-[protein] + H2O = L-seryl-[protein] + phosphate. The enzyme catalyses O-phospho-L-threonyl-[protein] + H2O = L-threonyl-[protein] + phosphate. The protein is Protein phosphatase PTC7 homolog fig of Drosophila virilis (Fruit fly).